Here is a 166-residue protein sequence, read N- to C-terminus: Protein SprT (166 aa).

Residues 20–164 (EHLANANRKL…CVRCGDLLVA (145 aa)) form the SprT-like domain. His-78 contacts Zn(2+). Residue Glu-79 is part of the active site. His-82 lines the Zn(2+) pocket.

It belongs to the SprT family. The cofactor is Zn(2+).

It is found in the cytoplasm. The polypeptide is Protein SprT (Klebsiella pneumoniae subsp. pneumoniae (strain ATCC 700721 / MGH 78578)).